The primary structure comprises 234 residues: Large ribosomal subunit protein uL1 (234 aa).

It belongs to the universal ribosomal protein uL1 family. As to quaternary structure, part of the 50S ribosomal subunit.

Its function is as follows. Binds directly to 23S rRNA. The L1 stalk is quite mobile in the ribosome, and is involved in E site tRNA release. Functionally, protein L1 is also a translational repressor protein, it controls the translation of the L11 operon by binding to its mRNA. This Campylobacter fetus subsp. fetus (strain 82-40) protein is Large ribosomal subunit protein uL1.